The chain runs to 368 residues: Biotin synthase (368 aa).

Residues Cys74–Arg309 form the Radical SAM core domain. 3 residues coordinate [4Fe-4S] cluster: Cys92, Cys96, and Cys99. Positions 137, 174, 234, and 304 each coordinate [2Fe-2S] cluster.

This sequence belongs to the radical SAM superfamily. Biotin synthase family. Homodimer. It depends on [4Fe-4S] cluster as a cofactor. Requires [2Fe-2S] cluster as cofactor.

It carries out the reaction (4R,5S)-dethiobiotin + (sulfur carrier)-SH + 2 reduced [2Fe-2S]-[ferredoxin] + 2 S-adenosyl-L-methionine = (sulfur carrier)-H + biotin + 2 5'-deoxyadenosine + 2 L-methionine + 2 oxidized [2Fe-2S]-[ferredoxin]. The protein operates within cofactor biosynthesis; biotin biosynthesis; biotin from 7,8-diaminononanoate: step 2/2. Catalyzes the conversion of dethiobiotin (DTB) to biotin by the insertion of a sulfur atom into dethiobiotin via a radical-based mechanism. This Rippkaea orientalis (strain PCC 8801 / RF-1) (Cyanothece sp. (strain PCC 8801)) protein is Biotin synthase.